The sequence spans 281 residues: Bifunctional protein FolD (281 aa).

NADP(+) contacts are provided by residues 164 to 166 (GRS), serine 189, and threonine 230.

Belongs to the tetrahydrofolate dehydrogenase/cyclohydrolase family. As to quaternary structure, homodimer.

It catalyses the reaction (6R)-5,10-methylene-5,6,7,8-tetrahydrofolate + NADP(+) = (6R)-5,10-methenyltetrahydrofolate + NADPH. The enzyme catalyses (6R)-5,10-methenyltetrahydrofolate + H2O = (6R)-10-formyltetrahydrofolate + H(+). It participates in one-carbon metabolism; tetrahydrofolate interconversion. In terms of biological role, catalyzes the oxidation of 5,10-methylenetetrahydrofolate to 5,10-methenyltetrahydrofolate and then the hydrolysis of 5,10-methenyltetrahydrofolate to 10-formyltetrahydrofolate. The polypeptide is Bifunctional protein FolD (Dictyoglomus turgidum (strain DSM 6724 / Z-1310)).